Consider the following 287-residue polypeptide: MKVLLLTGLGALFFAYYWDDNFDPASLQGARVLLTGASAGVGEELAYHYARLGSHLVLTAHTEALLQKVVGNCRKLGAPKVFYIAADMASPEAPESVVQFALDKLGGLDYLVLNHIGGVPAGTRARTPQATRWLMQVNFLSYVQLTSRALPSLTDSKGSLVVVSSLLGRVPTSFSTPYSAAKFALDSFFGSLRRELDVQDVNVAITMCVLGLRDRASAAEAVRGVTRVKAAPGPKAALAVIRGGATRAAGVFYPWRFHLLCLLRRWLPRPRAWFIRQDLNVTAAAAA.

A signal peptide spans 1–15 (MKVLLLTGLGALFFA). NADP(+) contacts are provided by residues 36–62 (GASA…TAHT), 87–88 (DM), and 114–116 (NHI). S165 contributes to the substrate binding site. Catalysis depends on Y178, which acts as the Proton acceptor. NADP(+)-binding positions include 178-182 (YSAAK) and 211-217 (GLRDRAS).

It belongs to the short-chain dehydrogenases/reductases (SDR) family.

The protein resides in the secreted. The enzyme catalyses cortisone + NADPH + H(+) = cortisol + NADP(+). Its function is as follows. Unidirectional NADP(+)-dependent cortisol dehydrogenase (in vitro). This chain is Hydroxysteroid 11-beta-dehydrogenase 1-like protein (HSD11B1L), found in Macaca fascicularis (Crab-eating macaque).